Consider the following 1048-residue polypeptide: Dyslexia-associated protein KIAA0319-like protein (1048 aa).

The Cytoplasmic portion of the chain corresponds to 1–29 (MEKRLGVKPSPASWVLPGYCWQTSVKLPR). A helical transmembrane segment spans residues 30–50 (SLYLLYSFFCFSVLWLSTDAD). The MANSC domain occupies 49–127 (ADESRCQQGK…PFRTDSSNSM (79 aa)). The Extracellular portion of the chain corresponds to 51–928 (ESRCQQGKTL…RDGDSNCEWS (878 aa)). 2 disordered regions span residues 198 to 218 (HGAM…LSPT) and 231 to 300 (SFTS…STSA). Positions 231 to 241 (SFTSNHTTQTP) are enriched in polar residues. N-linked (GlcNAc...) asparagine glycosylation is present at Asn-246. Low complexity-rich tracts occupy residues 247 to 261 (VSIH…SPVS) and 287 to 300 (ATPT…STSA). PKD domains are found at residues 309-400 (VVSA…VKPE), 408-497 (VAVV…VNKA), 503-593 (VANA…VQPE), 599-687 (QADA…VKEE), and 693-784 (VAKI…VKPD). An N-linked (GlcNAc...) asparagine glycan is attached at Asn-394. Positions 593–623 (ENNKPPQADAGPDKELTLPVDSTTLDGSKST) are disordered. The helical transmembrane segment at 929–949 (VLYVIIASFVIVVALGILSWT) threads the bilayer. The Cytoplasmic portion of the chain corresponds to 950-1048 (TICCCKRQKG…KSRSAREEIL (99 aa)). Thr-973 carries the phosphothreonine modification. Ser-977 is subject to Phosphoserine. Residues 980 to 1007 (LKPTSRAGSKQKGPTLSSSLMHSESELD) are disordered. A compositionally biased stretch (polar residues) spans 985–994 (RAGSKQKGPT). Ser-1008 and Ser-1030 each carry phosphoserine. Residues 1024-1048 (LYGQNGSVPNGQTPLKSRSAREEIL) form a disordered region. A compositionally biased stretch (polar residues) spans 1027–1039 (QNGSVPNGQTPLK). Thr-1036 carries the phosphothreonine modification.

Interacts with RTN4R. Post-translationally, N-glycosylated.

It is found in the cytoplasmic granule membrane. Its subcellular location is the golgi apparatus membrane. It localises to the golgi apparatus. The protein localises to the trans-Golgi network membrane. The protein resides in the cell membrane. Its function is as follows. Possible role in axon guidance through interaction with RTN4R. (Microbial infection) Acts as a receptor for adeno-associated virus and is involved in adeno-associated virus infection through endocytosis system. This chain is Dyslexia-associated protein KIAA0319-like protein, found in Mus musculus (Mouse).